A 260-amino-acid polypeptide reads, in one-letter code: MASTGASRSLAASPRPPQGRSSRQDKYSVLLPTYNERENLPLIVWLLVKSFSESAINYEIIIIDDGSPDGTREVAEQLAEIYGPDRILLRPREKKLGLGTAYIHGIKHATGNYVIIMDADLSHHPKFIPEFIRKQKEGNFDIVSGTRYKGNGGVYGWDLKRKIISRGANFITQILLRPGASDLTGSFRLYRKEVLQKLIEKCVSKGYVFQMEMIVRARQMNYTIGEVPISFVDRVYGESKLGGNEIVSFLKGLLTLFATT.

The disordered stretch occupies residues 1-25 (MASTGASRSLAASPRPPQGRSSRQD). Position 2 is an N-acetylalanine (Ala2). Phosphoserine occurs at positions 3 and 9. Pro32, Tyr34, Glu36, Ile63, Asp65, Asp118, Ala119, Asp120, Arg147, Arg234, and Lys240 together coordinate GDP-alpha-D-mannose. Asp120 serves as a coordination point for Mg(2+). Asp120 is a Mn(2+) binding site.

It belongs to the glycosyltransferase 2 family. Component of the dolichol-phosphate mannose (DPM) synthase complex composed of DPM1, DPM2 and DPM3; within the complex, directly interacts with DPM3. This interaction may stabilize DPM1. It depends on Mg(2+) as a cofactor. Mn(2+) is required as a cofactor. The cofactor is Ca(2+).

Its subcellular location is the endoplasmic reticulum. The enzyme catalyses a di-trans,poly-cis-dolichyl phosphate + GDP-alpha-D-mannose = a di-trans,poly-cis-dolichyl beta-D-mannosyl phosphate + GDP. Its pathway is protein modification; protein glycosylation. Transfers mannose from GDP-mannose to dolichol monophosphate to form dolichol phosphate mannose (Dol-P-Man) which is the mannosyl donor in pathways leading to N-glycosylation, glycosyl phosphatidylinositol membrane anchoring, and O-mannosylation of proteins; catalytic subunit of the dolichol-phosphate mannose (DPM) synthase complex. The protein is Dolichol-phosphate mannosyltransferase subunit 1 (Dpm1) of Mus musculus (Mouse).